The primary structure comprises 685 residues: Mannan-binding lectin serine protease 2 (685 aa).

The first 19 residues, 1-19 (MRLLIFLGLLWSLVATLLG), serve as a signal peptide directing secretion. The region spanning 20–137 (SKWPEPVFGR…TGFEAFYAAE (118 aa)) is the CUB 1 domain. Ca(2+) contacts are provided by E67 and D75. A disulfide bridge connects residues C72 and C90. An N-linked (GlcNAc...) asparagine glycan is attached at N103. Ca(2+) is bound by residues D120, S122, N123, D138, and E141. Residues 138–181 (DVDECRVSLGDSVPCDHYCHNYLGGYYCSCRAGYVLHQNKHTCS) enclose the EGF-like; calcium-binding domain. 5 disulfide bridges follow: C142/C156, C152/C165, C167/C180, C184/C211, and C241/C259. Residues N158 and G162 each contribute to the Ca(2+) site. N158 is modified ((3R)-3-hydroxyasparagine). Positions 184 to 296 (CSGQVFTGRS…TGWKIHYTST (113 aa)) constitute a CUB 2 domain. 2 N-linked (GlcNAc...) asparagine glycosylation sites follow: N285 and N308. Sushi domains lie at 298–363 (RPCP…ECSI) and 364–431 (IDCG…VCEP). Intrachain disulfides connect C300–C348, C328–C361, C366–C411, C396–C429, C433–C552, C598–C617, and C628–C659. Residues 444-683 (IVGGQPAKPG…YIPWIENIIS (240 aa)) form the Peptidase S1 domain. Active-site charge relay system residues include H483 and D532. N-linked (GlcNAc...) asparagine glycosylation is present at N545. S632 serves as the catalytic Charge relay system. The N-linked (GlcNAc...) asparagine glycan is linked to N641.

Belongs to the peptidase S1 family. As to quaternary structure, homodimer; disulfide-linked. Binds MBL2. Isoform 2 binds to MASP1. Binds SERPING1. In terms of processing, the iron and 2-oxoglutarate dependent 3-hydroxylation of aspartate and asparagine is (R) stereospecific within EGF domains. In terms of tissue distribution, plasma.

It is found in the secreted. The enzyme catalyses Selective cleavage after Arg-223 in complement component C2 (-Ser-Leu-Gly-Arg-|-Lys-Ile-Gln-Ile) and after Arg-76 in complement component C4 (-Gly-Leu-Gln-Arg-|-Ala-Leu-Glu-Ile).. Functionally, serum protease that plays an important role in the activation of the complement system via mannose-binding lectin. After activation by auto-catalytic cleavage it cleaves C2 and C4, leading to their activation and to the formation of C3 convertase. The sequence is that of Mannan-binding lectin serine protease 2 (Masp2) from Mus musculus (Mouse).